Reading from the N-terminus, the 1050-residue chain is Valine--tRNA ligase (1050 aa).

Residues 37 to 57 (EKKAAASDKPVKEAKAKKEQT) are compositionally biased toward basic and acidic residues. A disordered region spans residues 37 to 72 (EKKAAASDKPVKEAKAKKEQTVEAAEPVDQTPTGQR). Positions 127–137 (PNVTGNLHVGH) match the 'HIGH' region motif. Residues 642 to 646 (KMSKS) carry the 'KMSKS' region motif. Residue Lys-645 coordinates ATP.

The protein belongs to the class-I aminoacyl-tRNA synthetase family.

The catalysed reaction is tRNA(Val) + L-valine + ATP = L-valyl-tRNA(Val) + AMP + diphosphate. This is Valine--tRNA ligase from Caenorhabditis elegans.